Consider the following 259-residue polypeptide: Type III pantothenate kinase (259 aa).

6–13 provides a ligand contact to ATP; the sequence is DVGNTNCT. Substrate is bound at residue 107–110; it reads GSDR. D109 functions as the Proton acceptor in the catalytic mechanism. D129 serves as a coordination point for K(+). T132 provides a ligand contact to ATP. T184 is a binding site for substrate.

The protein belongs to the type III pantothenate kinase family. In terms of assembly, homodimer. NH4(+) is required as a cofactor. It depends on K(+) as a cofactor.

It is found in the cytoplasm. The enzyme catalyses (R)-pantothenate + ATP = (R)-4'-phosphopantothenate + ADP + H(+). Its pathway is cofactor biosynthesis; coenzyme A biosynthesis; CoA from (R)-pantothenate: step 1/5. Functionally, catalyzes the phosphorylation of pantothenate (Pan), the first step in CoA biosynthesis. The polypeptide is Type III pantothenate kinase (Listeria monocytogenes serovar 1/2a (strain ATCC BAA-679 / EGD-e)).